Reading from the N-terminus, the 182-residue chain is MSRRDNLIWIDLEMTGLDPDSDRIIEMAVVVTTSNLELVAEGPVIAVHQPDSVLALMDDWNRNTHGASGLTGRVKGSTIGEADAEKQILDFLAQHVDAGCSPMCGNSIGQDRRFLARYMKDLEKFFHYRNLDVSTLKELARRWRPEVAAGIKKKGSHQALEDIRESVEELRYYREHFLRLTD.

The 164-residue stretch at 7 to 170 folds into the Exonuclease domain; sequence LIWIDLEMTG…EDIRESVEEL (164 aa). Tyr-128 is a catalytic residue.

Belongs to the oligoribonuclease family.

The protein localises to the cytoplasm. Its function is as follows. 3'-to-5' exoribonuclease specific for small oligoribonucleotides. The chain is Oligoribonuclease from Hahella chejuensis (strain KCTC 2396).